The chain runs to 32 residues: Cytochrome c3, 10 kDa (32 aa).

Residues His16, Cys25, Cys28, and His29 each contribute to the heme site.

Monomer. In terms of processing, binds 1 heme group per subunit.

It is found in the periplasm. In terms of biological role, participates in sulfate respiration coupled with phosphorylation by transferring electrons from the enzyme dehydrogenase to ferredoxin. This is Cytochrome c3, 10 kDa from Desulfuromonas acetoxidans (Chloropseudomonas ethylica).